The chain runs to 148 residues: Endothelial differentiation-related factor 1 (148 aa).

N-acetylalanine is present on alanine 2. Serine 4 carries the phosphoserine modification. Position 25 is an N6-methyllysine (lysine 25). The segment covering 33 to 42 (RRGEDVETSK) has biased composition (basic and acidic residues). Residues 33-66 (RRGEDVETSKKWAAGQNKQHSITKNTAKLDRETE) form a disordered region. Residues 37 to 113 (DVETSKKWAA…QVIADYESGR (77 aa)) form an interaction with NR5A2, PPARG and NR1H3 region. Positions 48 to 58 (QNKQHSITKNT) are enriched in polar residues. Residues 69–108 (HHDRVTLEVGKVIQQGRQSKGLTQKDLATKINEKPQVIAD) form an interaction with TBP and NR5A1 region. The short motif at 81–88 (IQQGRQSK) is the IQ motif element. Residues 81–135 (IQQGRQSKGLTQKDLATKINEKPQVIADYESGRAIPNNQVLGKIERAIGLKLRGK) form the HTH cro/C1-type domain. A DNA-binding region (H-T-H motif) is located at residues 92 to 111 (QKDLATKINEKPQVIADYES).

In terms of assembly, interacts with TBP and the transcription factor IID (TFIID) complex, NR5A2, NR1H3 and PPARG. Interaction with TBP is regulated by phosphorylation. Binds NR5A1, ATF1, FOS and JUN via their conserved basic region. Binding to calmodulin is regulated by calcium and phosphorylation of the IQ motif. In terms of processing, phosphorylated (by PKA and PKC). In terms of tissue distribution, expressed in brain, liver, lung, kidney and heart (at protein level). Ubiquitously expressed. More abundant in heart, pancreas, liver, intestine and adipose tissues.

It is found in the cytoplasm. It localises to the nucleus. Transcriptional coactivator stimulating NR5A1 and ligand-dependent NR1H3/LXRA and PPARG transcriptional activities. Enhances the DNA-binding activity of ATF1, ATF2, CREB1 and NR5A1. Regulates nitric oxid synthase activity probably by sequestering calmodulin in the cytoplasm. May function in endothelial cells differentiation, hormone-induced cardiomyocytes hypertrophy and lipid metabolism. The protein is Endothelial differentiation-related factor 1 (EDF1) of Homo sapiens (Human).